The chain runs to 606 residues: Aspartate--tRNA(Asp/Asn) ligase (606 aa).

Glu-177 lines the L-aspartate pocket. The segment at 201-204 (QLFK) is aspartate. Arg-223 contacts L-aspartate. ATP contacts are provided by residues 223 to 225 (RDE) and Gln-232. L-aspartate is bound at residue His-461. Residue Glu-499 participates in ATP binding. Arg-506 contacts L-aspartate. Position 551 to 554 (551 to 554 (GLDR)) interacts with ATP.

It belongs to the class-II aminoacyl-tRNA synthetase family. Type 1 subfamily. In terms of assembly, homodimer.

The protein localises to the cytoplasm. The enzyme catalyses tRNA(Asx) + L-aspartate + ATP = L-aspartyl-tRNA(Asx) + AMP + diphosphate. Aspartyl-tRNA synthetase with relaxed tRNA specificity since it is able to aspartylate not only its cognate tRNA(Asp) but also tRNA(Asn). Reaction proceeds in two steps: L-aspartate is first activated by ATP to form Asp-AMP and then transferred to the acceptor end of tRNA(Asp/Asn). In Prochlorococcus marinus (strain NATL2A), this protein is Aspartate--tRNA(Asp/Asn) ligase.